The sequence spans 86 residues: Small ribosomal subunit protein bS20 (86 aa).

The protein belongs to the bacterial ribosomal protein bS20 family.

In terms of biological role, binds directly to 16S ribosomal RNA. This Pelagibacter ubique (strain HTCC1062) protein is Small ribosomal subunit protein bS20.